Here is a 189-residue protein sequence, read N- to C-terminus: Large ribosomal subunit protein eL18 (189 aa).

It belongs to the eukaryotic ribosomal protein eL18 family.

The protein resides in the cytoplasm. This Drosophila pseudoobscura pseudoobscura (Fruit fly) protein is Large ribosomal subunit protein eL18 (RpL18).